Reading from the N-terminus, the 263-residue chain is Phosphoinositide-3-kinase-interacting protein 1 (263 aa).

Residues Met1 to Cys18 form the signal peptide. The Extracellular portion of the chain corresponds to Leu19–Gly163. The region spanning Asp24–Cys99 is the Kringle domain. 3 cysteine pairs are disulfide-bonded: Cys25-Cys99, Cys46-Cys80, and Cys69-Cys94. An N-linked (GlcNAc...) asparagine glycan is attached at Asn103. Residues Thr164–Ile184 form a helical membrane-spanning segment. At Thr185–Ala263 the chain is on the cytoplasmic side. The tract at residues Asn239–Ala263 is disordered.

The protein resides in the cell membrane. In terms of biological role, negative regulator of hepatic phosphatidylinositol 3-kinase (PI3K) activity. The sequence is that of Phosphoinositide-3-kinase-interacting protein 1 (pik3ip1) from Danio rerio (Zebrafish).